Consider the following 179-residue polypeptide: DNA utilization protein HofN (179 aa).

A helical transmembrane segment spans residues 19–39 (LRFWLLMFVAPLLLAVGITLI).

The protein localises to the cell inner membrane. Required for the use of extracellular DNA as a nutrient. The protein is DNA utilization protein HofN (hofN) of Escherichia coli (strain K12).